The following is a 247-amino-acid chain: 2-amino-5-formylamino-6-ribosylaminopyrimidin-4(3H)-one 5'-monophosphate deformylase (247 aa).

Fe cation-binding residues include Glu-41, His-43, Asp-52, and His-121.

It belongs to the creatininase superfamily. FAPy deformylase family. Homodimer. Fe(2+) serves as cofactor. Requires Zn(2+) as cofactor.

The enzyme catalyses 2-amino-5-formylamino-6-(5-phospho-D-ribosylamino)pyrimidin-4(3H)-one + H2O = 2,5-diamino-6-(1-D-ribosylamino)pyrimidin-4(3H)-one 5'-phosphate + formate + H(+). The protein operates within cofactor biosynthesis; coenzyme F420 biosynthesis. Its pathway is cofactor biosynthesis; riboflavin biosynthesis. Catalyzes the hydrolysis of the formamide of 2-amino-5-formylamino-6-ribosylamino-4(3H)-pyrimidinone 5'-monophosphate (FAPy) to form 2,5-diamino-6-ribosylamino-4(3H)-pyrimidinone 5'-phosphate (APy). This chain is 2-amino-5-formylamino-6-ribosylaminopyrimidin-4(3H)-one 5'-monophosphate deformylase, found in Methanothermus fervidus (strain ATCC 43054 / DSM 2088 / JCM 10308 / V24 S).